The following is a 359-amino-acid chain: DNA polymerase IV (359 aa).

The 181-residue stretch at 4 to 184 (IVHVDMDAFY…LKVNRIPGVG (181 aa)) folds into the UmuC domain. Mg(2+) is bound by residues Asp8 and Asp102. Glu103 is a catalytic residue.

Belongs to the DNA polymerase type-Y family. As to quaternary structure, monomer. Mg(2+) is required as a cofactor.

It localises to the cytoplasm. The enzyme catalyses DNA(n) + a 2'-deoxyribonucleoside 5'-triphosphate = DNA(n+1) + diphosphate. Poorly processive, error-prone DNA polymerase involved in untargeted mutagenesis. Copies undamaged DNA at stalled replication forks, which arise in vivo from mismatched or misaligned primer ends. These misaligned primers can be extended by PolIV. Exhibits no 3'-5' exonuclease (proofreading) activity. May be involved in translesional synthesis, in conjunction with the beta clamp from PolIII. This Xanthomonas oryzae pv. oryzae (strain MAFF 311018) protein is DNA polymerase IV.